The sequence spans 306 residues: Aspartate carbamoyltransferase catalytic subunit (306 aa).

Carbamoyl phosphate-binding residues include Arg-55 and Thr-56. Residue Lys-85 participates in L-aspartate binding. Carbamoyl phosphate contacts are provided by Arg-106, His-133, and Gln-136. Residues Arg-166 and Arg-228 each contribute to the L-aspartate site. Residues Leu-264 and Pro-265 each contribute to the carbamoyl phosphate site.

This sequence belongs to the aspartate/ornithine carbamoyltransferase superfamily. ATCase family. In terms of assembly, heterododecamer (2C3:3R2) of six catalytic PyrB chains organized as two trimers (C3), and six regulatory PyrI chains organized as three dimers (R2).

The enzyme catalyses carbamoyl phosphate + L-aspartate = N-carbamoyl-L-aspartate + phosphate + H(+). It participates in pyrimidine metabolism; UMP biosynthesis via de novo pathway; (S)-dihydroorotate from bicarbonate: step 2/3. Its function is as follows. Catalyzes the condensation of carbamoyl phosphate and aspartate to form carbamoyl aspartate and inorganic phosphate, the committed step in the de novo pyrimidine nucleotide biosynthesis pathway. The chain is Aspartate carbamoyltransferase catalytic subunit from Serratia marcescens.